We begin with the raw amino-acid sequence, 159 residues long: Transmembrane protein 42 (159 aa).

A run of 4 helical transmembrane segments spans residues 37–57, 68–88, 100–120, and 124–144; these read FWGV…AASA, GFCV…WTFF, IASV…GFVL, and CQEV…TLIH.

The protein resides in the membrane. This is Transmembrane protein 42 (TMEM42) from Bos taurus (Bovine).